A 78-amino-acid polypeptide reads, in one-letter code: D-alanyl carrier protein (78 aa).

The region spanning 1-78 is the Carrier domain; sequence MDFNQEVLSV…QIIKQLNELR (78 aa). At Ser36 the chain carries O-(pantetheine 4'-phosphoryl)serine.

It belongs to the DltC family. Post-translationally, 4'-phosphopantetheine is transferred from CoA to a specific serine of apo-DCP.

It is found in the cytoplasm. Its pathway is cell wall biogenesis; lipoteichoic acid biosynthesis. Its function is as follows. Carrier protein involved in the D-alanylation of lipoteichoic acid (LTA). The loading of thioester-linked D-alanine onto DltC is catalyzed by D-alanine--D-alanyl carrier protein ligase DltA. The DltC-carried D-alanyl group is further transferred to cell membrane phosphatidylglycerol (PG) by forming an ester bond, probably catalyzed by DltD. D-alanylation of LTA plays an important role in modulating the properties of the cell wall in Gram-positive bacteria, influencing the net charge of the cell wall. The polypeptide is D-alanyl carrier protein (Bacillus licheniformis (strain ATCC 14580 / DSM 13 / JCM 2505 / CCUG 7422 / NBRC 12200 / NCIMB 9375 / NCTC 10341 / NRRL NRS-1264 / Gibson 46)).